Consider the following 210-residue polypeptide: Thiamine-phosphate synthase (210 aa).

4-amino-2-methyl-5-(diphosphooxymethyl)pyrimidine contacts are provided by residues 38–42 (QFREK) and Asn70. Positions 71 and 90 each coordinate Mg(2+). Ser107 serves as a coordination point for 4-amino-2-methyl-5-(diphosphooxymethyl)pyrimidine. 132–134 (TKT) is a 2-[(2R,5Z)-2-carboxy-4-methylthiazol-5(2H)-ylidene]ethyl phosphate binding site. A 4-amino-2-methyl-5-(diphosphooxymethyl)pyrimidine-binding site is contributed by Lys135. 183–184 (IS) is a binding site for 2-[(2R,5Z)-2-carboxy-4-methylthiazol-5(2H)-ylidene]ethyl phosphate.

Belongs to the thiamine-phosphate synthase family. Requires Mg(2+) as cofactor.

The enzyme catalyses 2-[(2R,5Z)-2-carboxy-4-methylthiazol-5(2H)-ylidene]ethyl phosphate + 4-amino-2-methyl-5-(diphosphooxymethyl)pyrimidine + 2 H(+) = thiamine phosphate + CO2 + diphosphate. The catalysed reaction is 2-(2-carboxy-4-methylthiazol-5-yl)ethyl phosphate + 4-amino-2-methyl-5-(diphosphooxymethyl)pyrimidine + 2 H(+) = thiamine phosphate + CO2 + diphosphate. It carries out the reaction 4-methyl-5-(2-phosphooxyethyl)-thiazole + 4-amino-2-methyl-5-(diphosphooxymethyl)pyrimidine + H(+) = thiamine phosphate + diphosphate. The protein operates within cofactor biosynthesis; thiamine diphosphate biosynthesis; thiamine phosphate from 4-amino-2-methyl-5-diphosphomethylpyrimidine and 4-methyl-5-(2-phosphoethyl)-thiazole: step 1/1. In terms of biological role, condenses 4-methyl-5-(beta-hydroxyethyl)thiazole monophosphate (THZ-P) and 2-methyl-4-amino-5-hydroxymethyl pyrimidine pyrophosphate (HMP-PP) to form thiamine monophosphate (TMP). The chain is Thiamine-phosphate synthase from Archaeoglobus fulgidus (strain ATCC 49558 / DSM 4304 / JCM 9628 / NBRC 100126 / VC-16).